Reading from the N-terminus, the 359-residue chain is POU domain, class 5, transcription factor 1B (359 aa).

2 disordered regions span residues 1–53 (MAGH…GVGP) and 87–116 (QGGL…EPCT). Phosphoserine is present on Ser-111. A POU-specific domain is found at 138 to 212 (DIKALQKELE…LLQKWVEEAD (75 aa)). A DNA-binding region (homeobox) is located at residues 229–288 (ARKRKRTSIENRVRGNLENLFLQCPKPTLQISHIAQQLGLEKDVVRVWFCNRRQKGKRSS). Position 235 is a phosphothreonine (Thr-235). Phosphoserine occurs at positions 236, 288, and 289. The disordered stretch occupies residues 287 to 322 (SSSDYAQREDFEAAGSPFSGGPVSFPPAPGPHFGTP). A compositionally biased stretch (low complexity) spans 299–309 (AAGSPFSGGPV). A Phosphoserine modification is found at Ser-354.

The protein belongs to the POU transcription factor family. Class-5 subfamily. Detected in epithelial cells of the prostate (at protein level). Detected at the mRNA level in several cancer tissues (breast, uterine cervix, lung, thyroid gland, esophagus, colon, urinary bladder, and glioma).

The protein resides in the nucleus. The protein localises to the cytoplasm. Functionally, shows weak transcriptional activator activity. This Homo sapiens (Human) protein is POU domain, class 5, transcription factor 1B (POU5F1B).